A 371-amino-acid polypeptide reads, in one-letter code: tRNA-specific 2-thiouridylase MnmA (371 aa).

ATP contacts are provided by residues 14 to 21 (GMSGGVDS) and Met40. The tract at residues 100–102 (NPD) is interaction with target base in tRNA. Cys105 acts as the Nucleophile in catalysis. A disulfide bridge connects residues Cys105 and Cys205. Position 129 (Gly129) interacts with ATP. An interaction with tRNA region spans residues 155 to 157 (KDQ). Cys205 (cysteine persulfide intermediate) is an active-site residue. The tract at residues 321–322 (RY) is interaction with tRNA.

It belongs to the MnmA/TRMU family.

Its subcellular location is the cytoplasm. The catalysed reaction is S-sulfanyl-L-cysteinyl-[protein] + uridine(34) in tRNA + AH2 + ATP = 2-thiouridine(34) in tRNA + L-cysteinyl-[protein] + A + AMP + diphosphate + H(+). In terms of biological role, catalyzes the 2-thiolation of uridine at the wobble position (U34) of tRNA, leading to the formation of s(2)U34. This is tRNA-specific 2-thiouridylase MnmA from Bordetella parapertussis (strain 12822 / ATCC BAA-587 / NCTC 13253).